The primary structure comprises 278 residues: Indole-3-glycerol phosphate synthase (278 aa).

This sequence belongs to the TrpC family.

The catalysed reaction is 1-(2-carboxyphenylamino)-1-deoxy-D-ribulose 5-phosphate + H(+) = (1S,2R)-1-C-(indol-3-yl)glycerol 3-phosphate + CO2 + H2O. It participates in amino-acid biosynthesis; L-tryptophan biosynthesis; L-tryptophan from chorismate: step 4/5. The polypeptide is Indole-3-glycerol phosphate synthase (Stutzerimonas stutzeri (strain A1501) (Pseudomonas stutzeri)).